A 161-amino-acid chain; its full sequence is Large ribosomal subunit protein uL16 (161 aa).

A disordered region spans residues 140–161 (LNKGNYKPAKTPVTADDSESSS).

Belongs to the universal ribosomal protein uL16 family. In terms of assembly, part of the 50S ribosomal subunit.

Binds 23S rRNA and is also seen to make contacts with the A and possibly P site tRNAs. In Prochlorococcus marinus (strain NATL1A), this protein is Large ribosomal subunit protein uL16.